The chain runs to 93 residues: ATP-dependent Clp protease adapter protein ClpS (93 aa).

Belongs to the ClpS family. In terms of assembly, binds to the N-terminal domain of the chaperone ClpA.

Its function is as follows. Involved in the modulation of the specificity of the ClpAP-mediated ATP-dependent protein degradation. The protein is ATP-dependent Clp protease adapter protein ClpS of Gloeobacter violaceus (strain ATCC 29082 / PCC 7421).